Here is a 622-residue protein sequence, read N- to C-terminus: C6 finger transcription factor fumR (622 aa).

Positions 94 to 123 (CDRCHGQKLRCRRENNSDTCVRCARAGVRC) form a DNA-binding region, zn(2)-C6 fungal-type. Disordered regions lie at residues 127 to 175 (PMRL…HSDH), 206 to 248 (ALTA…APNL), 299 to 360 (FDQA…SNSI), and 556 to 585 (PATG…DAGD). Composition is skewed to polar residues over residues 148–167 (PANG…GPND), 217–226 (VHTSQPSGPQ), and 347–360 (RGNS…SNSI). The span at 556-571 (PATGSASKTAASGPPA) shows a compositional bias: low complexity.

It is found in the nucleus. Functionally, transcription factor that regulates the expression of the gene clusters that mediate the biosynthesis of pseurotin and fumagillin. This is C6 finger transcription factor fumR from Aspergillus fumigatus (strain ATCC MYA-4609 / CBS 101355 / FGSC A1100 / Af293) (Neosartorya fumigata).